Here is a 234-residue protein sequence, read N- to C-terminus: Ubiquinone biosynthesis O-methyltransferase (234 aa).

4 residues coordinate S-adenosyl-L-methionine: R40, G59, D80, and M123.

The protein belongs to the methyltransferase superfamily. UbiG/COQ3 family.

The enzyme catalyses a 3-demethylubiquinol + S-adenosyl-L-methionine = a ubiquinol + S-adenosyl-L-homocysteine + H(+). The catalysed reaction is a 3-(all-trans-polyprenyl)benzene-1,2-diol + S-adenosyl-L-methionine = a 2-methoxy-6-(all-trans-polyprenyl)phenol + S-adenosyl-L-homocysteine + H(+). Its pathway is cofactor biosynthesis; ubiquinone biosynthesis. O-methyltransferase that catalyzes the 2 O-methylation steps in the ubiquinone biosynthetic pathway. The polypeptide is Ubiquinone biosynthesis O-methyltransferase (Coxiella burnetii (strain Dugway 5J108-111)).